Here is a 1829-residue protein sequence, read N- to C-terminus: Iron-regulated protein FrpC (1829 aa).

22 Hemolysin-type calcium-binding repeats span residues 869-886, 887-904, 1015-1032, 1033-1050, 1051-1068, 1069-1086, 1087-1104, 1215-1232, 1233-1250, 1251-1268, 1269-1286, 1287-1304, 1415-1432, 1433-1450, 1451-1468, 1469-1486, 1487-1504, 1615-1632, 1633-1650, 1651-1668, 1669-1686, and 1687-1704; these read FGHN…NDTL, IGGA…SDTY, NGGL…DDLL, NGDA…NDTL, NGGE…NDAL, NGGE…NDTL, DGGE…NDAL, and NGGE…NDVL.

Belongs to the RTX prokaryotic toxin (TC 1.C.11) family.

The protein localises to the cell outer membrane. The protein resides in the secreted. Its function is as follows. May participate in the pathogenesis of meningococcal disease. This Neisseria meningitidis serogroup C protein is Iron-regulated protein FrpC (frpC).